The primary structure comprises 464 residues: ATP synthase subunit beta (464 aa).

150–157 (GGAGVGKT) is a binding site for ATP.

Belongs to the ATPase alpha/beta chains family. As to quaternary structure, F-type ATPases have 2 components, CF(1) - the catalytic core - and CF(0) - the membrane proton channel. CF(1) has five subunits: alpha(3), beta(3), gamma(1), delta(1), epsilon(1). CF(0) has three main subunits: a(1), b(2) and c(9-12). The alpha and beta chains form an alternating ring which encloses part of the gamma chain. CF(1) is attached to CF(0) by a central stalk formed by the gamma and epsilon chains, while a peripheral stalk is formed by the delta and b chains.

The protein resides in the cell membrane. The catalysed reaction is ATP + H2O + 4 H(+)(in) = ADP + phosphate + 5 H(+)(out). Functionally, produces ATP from ADP in the presence of a proton gradient across the membrane. The catalytic sites are hosted primarily by the beta subunits. The sequence is that of ATP synthase subunit beta from Dehalococcoides mccartyi (strain ATCC BAA-2266 / KCTC 15142 / 195) (Dehalococcoides ethenogenes (strain 195)).